A 299-amino-acid chain; its full sequence is MLNDYLQWEKFILRGVEFPTRYRVDGDEVEITPSSRLYVSGMGGSGVVGDLIRDFSIVWNWDVEVTVVKDYFLRARDGLLIAVSYSGNTVETLYSVEYAKKRRIPTVAITTGGKLAQMGVPTIIIPKASAPRAALPQMLTAALHVVRKVYGIPIEIPEALEPPNDPLIHKLMEDFQKRPTIVAPETMRGVAYRVKNEFNENAKIEPSVEILPEAHHNWIEGSERPIVALTSPHIPREHQERVKATLEILGGTLYVVEMSTRGVLTFLREVGVASIKLAESRGVNPLATPRIEALKRRLQ.

The SIS domain occupies 27 to 177; the sequence is DEVEITPSSR…IHKLMEDFQK (151 aa). D-fructose 6-phosphate contacts are provided by G44, S45, S84, S86, T89, and R132. E200 serves as the catalytic Proton acceptor. The D-fructose 6-phosphate site is built by H216 and K295. H216 serves as the catalytic Proton donor. K295 serves as the catalytic Proton acceptor.

It belongs to the PGI/PMI family. As to quaternary structure, homodimer.

It catalyses the reaction alpha-D-glucose 6-phosphate = beta-D-fructose 6-phosphate. The catalysed reaction is D-mannose 6-phosphate = D-fructose 6-phosphate. With respect to regulation, presence or absence of metal ions or EDTA does not significantly affect the phosphoglucose isomerase activity. Dual specificity isomerase that catalyzes the isomerization of both glucose-6-phosphate and mannose-6-phosphate to fructose-6-phosphate with nearly similar catalytic efficiency. Also catalyzes the epimerization of mannose 6-phosphate to glucose 6-phosphate but the rate of epimerization reaction is 20-fold lower than that of isomerization reaction. The polypeptide is Bifunctional phosphoglucose/phosphomannose isomerase (Pyrobaculum calidifontis (strain DSM 21063 / JCM 11548 / VA1)).